Consider the following 310-residue polypeptide: tRNA pseudouridine synthase B (310 aa).

Residue Asp47 is the Nucleophile of the active site.

The protein belongs to the pseudouridine synthase TruB family. Type 1 subfamily.

It catalyses the reaction uridine(55) in tRNA = pseudouridine(55) in tRNA. Responsible for synthesis of pseudouridine from uracil-55 in the psi GC loop of transfer RNAs. The sequence is that of tRNA pseudouridine synthase B from Caulobacter sp. (strain K31).